The sequence spans 570 residues: Putative diflavin flavoprotein A 6 (570 aa).

Residues 38–231 (AKGTTANSYL…FPTRLYATGH (194 aa)) are zinc metallo-hydrolase. Residues 260 to 402 (VALIYASAYG…AGTDFAQALK (143 aa)) enclose the Flavodoxin-like domain. Positions 421 to 570 (VGRIVGSLCV…VHHRKSGNHY (150 aa)) are flavodoxin-reductase-like.

It in the N-terminal section; belongs to the zinc metallo-hydrolase group 3 family. The protein in the C-terminal section; belongs to the flavodoxin reductase family. It depends on Fe cation as a cofactor.

In terms of biological role, mediates electron transfer from NADH to oxygen, reducing it to water. This modular protein has 3 redox cofactors, in other organisms the same activity requires 2 or 3 proteins. The protein is Putative diflavin flavoprotein A 6 (dfa6) of Nostoc sp. (strain PCC 7120 / SAG 25.82 / UTEX 2576).